An 828-amino-acid polypeptide reads, in one-letter code: Beta-galactosidase (828 aa).

The signal sequence occupies residues 1–20 (MKMKQFNLLSLFLILITSFG). 2 N-linked (GlcNAc...) asparagine glycosylation sites follow: Asn-23 and Asn-153. Catalysis depends on Glu-183, which acts as the Proton donor. Glu-252 (nucleophile) is an active-site residue. 7 N-linked (GlcNAc...) asparagine glycosylation sites follow: Asn-253, Asn-350, Asn-379, Asn-492, Asn-667, Asn-799, and Asn-803. In terms of domain architecture, SUEL-type lectin spans 742 to 828 (AHEHNKVELS…PKRLFVEVEC (87 aa)).

Belongs to the glycosyl hydrolase 35 family.

It localises to the secreted. The protein localises to the extracellular space. It is found in the apoplast. The enzyme catalyses Hydrolysis of terminal non-reducing beta-D-galactose residues in beta-D-galactosides.. In Brassica oleracea (Wild cabbage), this protein is Beta-galactosidase.